The sequence spans 465 residues: Cysteine--tRNA ligase (465 aa).

C29 serves as a coordination point for Zn(2+). The 'HIGH' region signature appears at 31–41 (PTVYNYIHIGN). Residues C209, H234, and E238 each coordinate Zn(2+). Residues 266 to 270 (KMSKS) carry the 'KMSKS' region motif. K269 contacts ATP. S270 is modified (phosphoserine).

It belongs to the class-I aminoacyl-tRNA synthetase family. Monomer. Requires Zn(2+) as cofactor.

It is found in the cytoplasm. The enzyme catalyses tRNA(Cys) + L-cysteine + ATP = L-cysteinyl-tRNA(Cys) + AMP + diphosphate. The chain is Cysteine--tRNA ligase from Bacillus anthracis (strain A0248).